The sequence spans 27 residues: MYSYIYKALLYHGYEKFDLDIWEYFNK.

It localises to the mitochondrion. This is an uncharacterized protein from Emericella nidulans (Aspergillus nidulans).